Here is a 231-residue protein sequence, read N- to C-terminus: 2,3-bisphosphoglycerate-dependent phosphoglycerate mutase (231 aa).

Residues Arg-8–Asn-15, Thr-21–Gly-22, Arg-60, Glu-87–Tyr-90, Lys-98, Arg-114–Arg-115, and Gly-183–Asn-184 each bind substrate. His-9 functions as the Tele-phosphohistidine intermediate in the catalytic mechanism. Glu-87 serves as the catalytic Proton donor/acceptor.

It belongs to the phosphoglycerate mutase family. BPG-dependent PGAM subfamily.

It carries out the reaction (2R)-2-phosphoglycerate = (2R)-3-phosphoglycerate. The protein operates within carbohydrate degradation; glycolysis; pyruvate from D-glyceraldehyde 3-phosphate: step 3/5. Functionally, catalyzes the interconversion of 2-phosphoglycerate and 3-phosphoglycerate. The polypeptide is 2,3-bisphosphoglycerate-dependent phosphoglycerate mutase (Streptococcus equi subsp. zooepidemicus (strain H70)).